The primary structure comprises 829 residues: Leucine--tRNA ligase (829 aa).

The 'HIGH' region signature appears at 40–50 (PYPSGNIHMGH). The 'KMSKS' region signature appears at 581-585 (KMSKS). Position 584 (lysine 584) interacts with ATP.

It belongs to the class-I aminoacyl-tRNA synthetase family.

It localises to the cytoplasm. It carries out the reaction tRNA(Leu) + L-leucine + ATP = L-leucyl-tRNA(Leu) + AMP + diphosphate. In Oleidesulfovibrio alaskensis (strain ATCC BAA-1058 / DSM 17464 / G20) (Desulfovibrio alaskensis), this protein is Leucine--tRNA ligase.